A 196-amino-acid polypeptide reads, in one-letter code: Peptidyl-tRNA hydrolase (196 aa).

Residue tyrosine 18 participates in tRNA binding. Catalysis depends on histidine 23, which acts as the Proton acceptor. Positions 69, 71, and 117 each coordinate tRNA.

Belongs to the PTH family. Monomer.

Its subcellular location is the cytoplasm. It carries out the reaction an N-acyl-L-alpha-aminoacyl-tRNA + H2O = an N-acyl-L-amino acid + a tRNA + H(+). Hydrolyzes ribosome-free peptidyl-tRNAs (with 1 or more amino acids incorporated), which drop off the ribosome during protein synthesis, or as a result of ribosome stalling. In terms of biological role, catalyzes the release of premature peptidyl moieties from peptidyl-tRNA molecules trapped in stalled 50S ribosomal subunits, and thus maintains levels of free tRNAs and 50S ribosomes. This chain is Peptidyl-tRNA hydrolase, found in Vibrio campbellii (strain ATCC BAA-1116).